Consider the following 431-residue polypeptide: Enolase (431 aa).

Gln-163 serves as a coordination point for (2R)-2-phosphoglycerate. The active-site Proton donor is Glu-205. The Mg(2+) site is built by Asp-242, Glu-288, and Asp-315. The (2R)-2-phosphoglycerate site is built by Lys-340, Arg-369, Ser-370, and Lys-391. Lys-340 serves as the catalytic Proton acceptor.

It belongs to the enolase family. Mg(2+) serves as cofactor.

The protein resides in the cytoplasm. It localises to the secreted. The protein localises to the cell surface. The enzyme catalyses (2R)-2-phosphoglycerate = phosphoenolpyruvate + H2O. It participates in carbohydrate degradation; glycolysis; pyruvate from D-glyceraldehyde 3-phosphate: step 4/5. Catalyzes the reversible conversion of 2-phosphoglycerate (2-PG) into phosphoenolpyruvate (PEP). It is essential for the degradation of carbohydrates via glycolysis. This is Enolase from Bacillus mycoides (strain KBAB4) (Bacillus weihenstephanensis).